We begin with the raw amino-acid sequence, 197 residues long: Recombination protein RecR (197 aa).

The C4-type zinc finger occupies 56–71 (CPVCGTLDTRAPCSIC). The region spanning 79–174 (TLICVVRDVA…TVSGLAQGVP (96 aa)) is the Toprim domain.

This sequence belongs to the RecR family.

Functionally, may play a role in DNA repair. It seems to be involved in an RecBC-independent recombinational process of DNA repair. It may act with RecF and RecO. In Rhodospirillum rubrum (strain ATCC 11170 / ATH 1.1.1 / DSM 467 / LMG 4362 / NCIMB 8255 / S1), this protein is Recombination protein RecR.